The primary structure comprises 575 residues: Preterminal protein (575 aa).

The Nuclear localization signal signature appears at 309–318; it reads RLPRVTRRRR. The tract at residues 314–340 is disordered; sequence TRRRRRPPSPAPPPEEIEEAAMEVEEP. Positions 328 to 340 are enriched in acidic residues; it reads EEIEEAAMEVEEP. S510 is subject to O-(5'-phospho-DNA)-serine.

The protein belongs to the adenoviridae terminal protein family. In terms of assembly, heterodimer with the polymerase; this heterodimer binds to bp 9 to 18 of the genome. Interacts with host POU2F1; POU2F1 binds to the auxiliary sequences in the inverted terminal repeats and tethers the pTP-POL heterodimer to the origin DNA thereby participating in the assembly of the pre-initiation complex (POL-TP-DBP-NFIA-POU2F1). Preterminal protein is used to replicate viral genome, upon genomic encapsidation it is processed first into iTP and finally into TP by adenovirus protease.

The protein localises to the host nucleus matrix. Protein covalently bound to the viral DNA that acts as a primer for viral genomic replication by DNA strand displacement. Assembles on the viral origin of replication in an initiation complex with viral polymerase, DBP, host NFIA and host POU2F1/OCT1. During initiation, the polymerase covalently couples the first dCTP with Ser-580 of pTP. The terminal protein stimulates the template activity over 20 fold compared to protein-free templates. Neo-synthesized viral genomes are linked to two preterminal proteins, one for each 5' end. These new genomes are encapsidated in the nucleus, and during capsid maturation by viral protease, preterminal protein is first cleaved into intermediary (iTP), then into mature TP. May play a role in host nuclear matrix localization of genomic DNA. The sequence is that of Preterminal protein from Fowl adenovirus A serotype 1 (strain CELO / Phelps) (FAdV-1).